The sequence spans 233 residues: Large ribosomal subunit protein uL1 (233 aa).

The protein belongs to the universal ribosomal protein uL1 family. In terms of assembly, part of the 50S ribosomal subunit.

In terms of biological role, binds directly to 23S rRNA. The L1 stalk is quite mobile in the ribosome, and is involved in E site tRNA release. Protein L1 is also a translational repressor protein, it controls the translation of the L11 operon by binding to its mRNA. This chain is Large ribosomal subunit protein uL1, found in Vibrio cholerae serotype O1 (strain ATCC 39315 / El Tor Inaba N16961).